Reading from the N-terminus, the 462-residue chain is Phospho-2-dehydro-3-deoxyheptonate aldolase AroG (462 aa).

Mn(2+) is bound at residue C87. Residues R126, 283–284, K306, and R337 contribute to the phosphoenolpyruvate site; that span reads ER. Mn(2+) contacts are provided by H369, E411, and D441.

As to quaternary structure, homodimer. Interacts with Rv0948c. Requires Mn(2+) as cofactor. Co(2+) serves as cofactor. It depends on Cd(2+) as a cofactor.

The catalysed reaction is D-erythrose 4-phosphate + phosphoenolpyruvate + H2O = 7-phospho-2-dehydro-3-deoxy-D-arabino-heptonate + phosphate. It participates in metabolic intermediate biosynthesis; chorismate biosynthesis; chorismate from D-erythrose 4-phosphate and phosphoenolpyruvate: step 1/7. Its activity is regulated as follows. Feedback inhibited by tryptophan, tyrosine, phenylalanine and chorismate. Catalyzes an aldol-like condensation reaction between phosphoenolpyruvate (PEP) and D-erythrose 4-phosphate (E4P) to generate 3-deoxy-D-arabino-heptulosonate 7-phosphate (DAH7P) and inorganic phosphate. The sequence is that of Phospho-2-dehydro-3-deoxyheptonate aldolase AroG (aroG) from Mycobacterium tuberculosis (strain ATCC 25618 / H37Rv).